The sequence spans 625 residues: Inactive glucose-6-phosphate 1-dehydrogenase 4, chloroplastic (625 aa).

A chloroplast-targeting transit peptide spans 1-49 (MSLSSCLLPFSQSATAPSSSVCSCHLAASFSNFPVSSRDYSFSRSGSLV). Residues 160–167 (GATGELAR) and R194 contribute to the NADP(+) site. A disulfide bridge links C212 with C220. K297 contacts NADP(+). Residues K297, 327-331 (HMLGR), E365, and D382 contribute to the D-glucose 6-phosphate site. H387 (proton acceptor) is an active-site residue. NADP(+) contacts are provided by R471, R480, R513, and R606.

This sequence belongs to the glucose-6-phosphate dehydrogenase family. As to quaternary structure, forms homodimer. Interacts with G6PD1. As to expression, expressed in leaves, stems and buds.

Its subcellular location is the plastid. The protein resides in the chloroplast stroma. Functionally, seems to be a catalytically inactive enzyme. In Arabidopsis thaliana (Mouse-ear cress), this protein is Inactive glucose-6-phosphate 1-dehydrogenase 4, chloroplastic.